The sequence spans 500 residues: NAD(P)H-quinone oxidoreductase subunit 2 A, chloroplastic (500 aa).

13 helical membrane passes run 14–34 (LLLFDGSLIFPECILIFGLIL), 47–67 (IPWFYFISSTSLVMSITALLF), 89–109 (IFQFLILLCSTLSIPLSVEYI), 114–134 (MAITEFLLFILTATLGGMFLC), 139–159 (FITIFVAPECFSLCSYLLSGY), 173–193 (YLLMGGASSSILVHAFSWLYG), 217–237 (PGISIALIFITVGIGFKLSPA), 285–305 (WHLLLEILAILSMILGNLIAI), 313–333 (MLAYSSIGQIGYVIIGIIVGD), 344–364 (YMLFYISMNLGTFACIVLFGL), 385–405 (ALSLALCLLSLGGLPPLAGFF), 408–428 (LHLFWCGWQAGLSFLVSIGLL), and 474–494 (MIVCVIASTIPGISMNPIIAI).

It belongs to the complex I subunit 2 family. In terms of assembly, NDH is composed of at least 16 different subunits, 5 of which are encoded in the nucleus.

It is found in the plastid. Its subcellular location is the chloroplast thylakoid membrane. The catalysed reaction is a plastoquinone + NADH + (n+1) H(+)(in) = a plastoquinol + NAD(+) + n H(+)(out). It catalyses the reaction a plastoquinone + NADPH + (n+1) H(+)(in) = a plastoquinol + NADP(+) + n H(+)(out). Functionally, NDH shuttles electrons from NAD(P)H:plastoquinone, via FMN and iron-sulfur (Fe-S) centers, to quinones in the photosynthetic chain and possibly in a chloroplast respiratory chain. The immediate electron acceptor for the enzyme in this species is believed to be plastoquinone. Couples the redox reaction to proton translocation, and thus conserves the redox energy in a proton gradient. This Pelargonium hortorum (Common geranium) protein is NAD(P)H-quinone oxidoreductase subunit 2 A, chloroplastic.